We begin with the raw amino-acid sequence, 190 residues long: Elongation factor P-like protein (190 aa).

It belongs to the elongation factor P family.

This Yersinia enterocolitica serotype O:8 / biotype 1B (strain NCTC 13174 / 8081) protein is Elongation factor P-like protein.